Reading from the N-terminus, the 300-residue chain is uncharacterized protein (300 aa).

Topologically, residues 1-7 (MGSTRKG) are periplasmic. Residues 8-28 (MLNVLIAAVLWGSSGVCAQYI) traverse the membrane as a helical segment. The EamA 1 domain maps to 16–145 (VLWGSSGVCA…SLIGTFLLVT (130 aa)). Residues 29–45 (MEQSRMSSQFLTMIRLL) are Cytoplasmic-facing. The chain crosses the membrane as a helical span at residues 46-66 (FAGLILVTFSFMHGDKIFSIL). Residues 67–71 (KNRKD) lie on the Periplasmic side of the membrane. A helical membrane pass occupies residues 72–92 (ALSLLIFSVVGALTVQLTFLL). At 93 to 99 (TIEKSNA) the chain is on the cytoplasmic side. The helical transmembrane segment at 100-120 (ATATVLQFLSPTIIVAWFALA) threads the bilayer. At 121-124 (RRTR) the chain is on the periplasmic side. The chain crosses the membrane as a helical span at residues 125–145 (PGILVLTAILTSLIGTFLLVT). Residues 146–151 (HGNPTS) lie on the Cytoplasmic side of the membrane. The helical transmembrane segment at 152-172 (LSISSAALFWGIASAFAAAFY) threads the bilayer. The 125-residue stretch at 167-291 (FAAAFYTTWP…ILSSVILISL (125 aa)) folds into the EamA 2 domain. Residues 173-184 (TTWPSRLIAQYG) lie on the Periplasmic side of the membrane. The helical transmembrane segment at 185 to 205 (TLPVVGWSMSFGGLILLPFYA) threads the bilayer. The Cytoplasmic segment spans residues 206–216 (KEGTHFAVSGS). Residues 217–237 (LILAFFYLVVIGTSLTFSLYL) form a helical membrane-spanning segment. At 238–263 (KGAQLIGGPKASILSCAEPLSSALLS) the chain is on the periplasmic side. The chain crosses the membrane as a helical span at residues 264-284 (LLLLGISFTLPDWLGTLLILS). Topologically, residues 285–300 (SVILISLDSRRRARAA) are cytoplasmic.

This sequence belongs to the EamA transporter family.

Its subcellular location is the cell inner membrane. This is an uncharacterized protein from Salmonella typhimurium (strain LT2 / SGSC1412 / ATCC 700720).